The following is a 1274-amino-acid chain: DENN domain-containing protein 3 (1274 aa).

Positions 65-108 (GQVPGASCALGKGRRRSFRKKREKPRMEPWKSHPGDSKGPDSED) are disordered. A uDENN domain is found at 75–245 (GKGRRRSFRK…LIPSPPPGPL (171 aa)). Positions 76-88 (KGRRRSFRKKREK) are enriched in basic residues. Residues 89–105 (PRMEPWKSHPGDSKGPD) are compositionally biased toward basic and acidic residues. In terms of domain architecture, cDENN spans 268-400 (IVDLDLHLPL…PLLLAQTFIQ (133 aa)). Residues 402–506 (VQSLQLHPDL…KARLNGRMDA (105 aa)) enclose the dDENN domain. The linker stretch occupies residues 520–970 (RIDRMLISPR…KHKINPSAGE (451 aa)). Residues Ser-554 and Ser-572 each carry the phosphoserine; by ULK1 modification. Residue Tyr-940 is modified to Phosphotyrosine. 7 WD repeats span residues 975 to 1013 (AIEVLLYTPGRLDPAEKVEDAHPKLWCALNEGKVVVFDA), 1019 to 1055 (HQHCFKVGSSKVNCMVMAEHNQVWVGSEDSVIYIINV), 1059 to 1099 (SCNK…AWNV), 1103 to 1140 (RVISRFQLSYGDLLSISLHNDRIWCCTVHKILVVTPQG), 1146 to 1181 (LKHPKDASFLAFQLLPEEQQLWAASTGVSELYMWSL), 1186 to 1228 (QPPQ…IYVM), and 1234 to 1273 (TVEKELVAHLDTVRTLCSAEDRYVLSGAGQEEGKIAIWKV).

As to quaternary structure, forms oligomers. Interacts with 6 of the 7 known isoforms of 14-3-3 proteins.

Its subcellular location is the cytoplasm. Its function is as follows. Guanine nucleotide exchange factor (GEF) activating Rab12. Promotes the exchange of GDP to GTP, converting inactive GDP-bound Rab12 into its active GTP-bound form. Regulates autophagy in response to starvation through Rab12 activation. Starvation leads to ULK1/2-dependent phosphorylation of Ser-554 and Ser-572, which in turn allows recruitment of 14-3-3 adapter proteins and leads to up-regulation of GEF activity towards Rab12. Also plays a role in protein transport from recycling endosomes to lysosomes, regulating, for instance, the degradation of the transferrin receptor and of the amino acid transporter PAT4. Starvation also induces phosphorylation at Tyr-940, which leads to up-regulated GEF activity and initiates autophagy. This is DENN domain-containing protein 3 (Dennd3) from Mus musculus (Mouse).